A 339-amino-acid polypeptide reads, in one-letter code: Deubiquitinase and deneddylase Dub2 (339 aa).

A helical transmembrane segment spans residues 36–56 (IIIALFLIVISCGLILCAYTF). Catalysis depends on residues His203, Asp220, and Cys282.

Belongs to the peptidase C48 family.

The protein localises to the secreted. It is found in the host cell. Its subcellular location is the membrane. Its function is as follows. Effector proteins function to alter host cell physiology and promote bacterial survival in host tissues. This protease possesses deubiquitinating and deneddylating activities. In Chlamydia trachomatis serovar D (strain ATCC VR-885 / DSM 19411 / UW-3/Cx), this protein is Deubiquitinase and deneddylase Dub2 (cdu2).